The sequence spans 218 residues: Putative receptor like protein 25 (218 aa).

The Extracellular segment spans residues 1 to 178; that stretch reads MIYTKNAYGS…QEDAKVLNWK (178 aa). LRR repeat units follow at residues 34–58, 59–82, 83–106, and 108–131; these read LTLY…IGLL, KALI…MANL, IELE…LKTL, and FLGY…QITG. Asn-65 carries an N-linked (GlcNAc...) asparagine glycan. N-linked (GlcNAc...) asparagine glycosylation occurs at Asn-113. The chain crosses the membrane as a helical span at residues 179–199; the sequence is AVATGYGPGVFFGLAIAQIIA. The Cytoplasmic segment spans residues 200 to 218; that stretch reads SYKPEWLVKIIGPNKRRNH.

It belongs to the RLP family.

The protein localises to the cell membrane. The polypeptide is Putative receptor like protein 25 (Arabidopsis thaliana (Mouse-ear cress)).